A 1071-amino-acid chain; its full sequence is DNA-directed RNA polymerase subunit beta (1071 aa).

The protein belongs to the RNA polymerase beta chain family. In plastids the minimal PEP RNA polymerase catalytic core is composed of four subunits: alpha, beta, beta', and beta''. When a (nuclear-encoded) sigma factor is associated with the core the holoenzyme is formed, which can initiate transcription.

The protein resides in the plastid. It localises to the chloroplast. The enzyme catalyses RNA(n) + a ribonucleoside 5'-triphosphate = RNA(n+1) + diphosphate. Its function is as follows. DNA-dependent RNA polymerase catalyzes the transcription of DNA into RNA using the four ribonucleoside triphosphates as substrates. This Anthoceros angustus (Hornwort) protein is DNA-directed RNA polymerase subunit beta.